We begin with the raw amino-acid sequence, 317 residues long: E3 ubiquitin-protein ligase NRDP1 (317 aa).

The RING-type; degenerate zinc finger occupies 18–57 (CPICSGVLEEPVQAPHCEHAFCNACITQWFSQQQTCPVDR). The segment at 78 to 138 (KLQIACDNAV…LPNHNCIKHL (61 aa)) adopts an SIAH-type; degenerate zinc-finger fold.

Interacts with USP8, ERBB3, PRKN and BIRC6. Interacts with CSF2RB, EPOR, IL3RA, MYD88 and TBK1. Interacts with CLEC16A. Post-translationally, autoubiquitinated. Autoubiquitination leads to proteasomal degradation. Deubiquitinated by USP8 to get stabilized which induces apoptosis. As to expression, detected in ovary, testis and prostate.

It catalyses the reaction S-ubiquitinyl-[E2 ubiquitin-conjugating enzyme]-L-cysteine + [acceptor protein]-L-lysine = [E2 ubiquitin-conjugating enzyme]-L-cysteine + N(6)-ubiquitinyl-[acceptor protein]-L-lysine.. It participates in protein modification; protein ubiquitination. Acts as E3 ubiquitin-protein ligase and regulates the degradation of target proteins. Polyubiquitinates MYD88. Negatively regulates MYD88-dependent production of pro-inflammatory cytokines. Can promote TRIF-dependent production of type I interferon and inhibits infection with vesicular stomatitis virus. Promotes also activation of TBK1 and IRF3. Involved in the ubiquitination of erythropoietin (EPO) and interleukin-3 (IL-3) receptors. Thus, through maintaining basal levels of cytokine receptors, RNF41 is involved in the control of hematopoietic progenitor cell differentiation into myeloerythroid lineages. Contributes to the maintenance of steady-state ERBB3 levels by mediating its growth factor-independent degradation. Involved in the degradation of the inhibitor of apoptosis BIRC6 and thus is an important regulator of cell death by promoting apoptosis. Also acts as a PRKN modifier that accelerates its degradation, resulting in a reduction of PRKN activity, influencing the balance of intracellular redox state. The RNF41-PRKN pathway regulates autophagosome-lysosome fusion during late mitophagy. Mitophagy is a selective form of autophagy necessary for mitochondrial quality control. The polypeptide is E3 ubiquitin-protein ligase NRDP1 (RNF41) (Homo sapiens (Human)).